Consider the following 72-residue polypeptide: Cell division protein ZapB (72 aa).

A coiled-coil region spans residues 1 to 71 (MSLEILDQLE…IRSLLGKFDN (71 aa)).

Belongs to the ZapB family. As to quaternary structure, homodimer. The ends of the coiled-coil dimer bind to each other, forming polymers. Interacts with FtsZ.

It localises to the cytoplasm. Functionally, non-essential, abundant cell division factor that is required for proper Z-ring formation. It is recruited early to the divisome by direct interaction with FtsZ, stimulating Z-ring assembly and thereby promoting cell division earlier in the cell cycle. Its recruitment to the Z-ring requires functional FtsA or ZipA. This chain is Cell division protein ZapB, found in Haemophilus influenzae (strain 86-028NP).